We begin with the raw amino-acid sequence, 87 residues long: DNA polymerase epsilon subunit C (87 aa).

As to quaternary structure, DNA polymerase epsilon is a heterotetramer consisting of cdc20/Pol2, dpb2, dpb3, and dpb4. Also forms a heterodimer consisting dpb3 and dpb4. Interacts directly with cdc20/pol2 and dpb4.

It localises to the nucleus. Its function is as follows. As accessory component of the DNA polymerase epsilon (DNA polymerase II) participates in chromosomal DNA replication. It is required during synthesis of the leading and lagging DNA strands at the replication fork and binds at/or near replication origins and moves along DNA with the replication fork. It has 3'-5' proofreading exonuclease activity that correct errors arising during DNA replication. It is also involved in DNA synthesis during DNA repair. The dpb3-dpb4 dimer associates with histone deacetylases, chromatin remodelers, and histones and plays a crucial role in the inheritance of histone hypoacetylation and H3K9 methylation in heterochromatin. The dpb3-dpb4 dimer is also required for the recruitment of sir2 to heterochromatin. In Schizosaccharomyces pombe (strain 972 / ATCC 24843) (Fission yeast), this protein is DNA polymerase epsilon subunit C.